Here is a 274-residue protein sequence, read N- to C-terminus: 2,3,4,5-tetrahydropyridine-2,6-dicarboxylate N-succinyltransferase (274 aa).

Residues Arg-106 and Asp-143 each contribute to the substrate site.

Belongs to the transferase hexapeptide repeat family. As to quaternary structure, homotrimer.

The protein resides in the cytoplasm. The catalysed reaction is (S)-2,3,4,5-tetrahydrodipicolinate + succinyl-CoA + H2O = (S)-2-succinylamino-6-oxoheptanedioate + CoA. The protein operates within amino-acid biosynthesis; L-lysine biosynthesis via DAP pathway; LL-2,6-diaminopimelate from (S)-tetrahydrodipicolinate (succinylase route): step 1/3. The protein is 2,3,4,5-tetrahydropyridine-2,6-dicarboxylate N-succinyltransferase of Rickettsia conorii (strain ATCC VR-613 / Malish 7).